The following is a 262-amino-acid chain: Indole-3-glycerol phosphate synthase (262 aa).

The protein belongs to the TrpC family.

It catalyses the reaction 1-(2-carboxyphenylamino)-1-deoxy-D-ribulose 5-phosphate + H(+) = (1S,2R)-1-C-(indol-3-yl)glycerol 3-phosphate + CO2 + H2O. It participates in amino-acid biosynthesis; L-tryptophan biosynthesis; L-tryptophan from chorismate: step 4/5. In Bordetella pertussis (strain Tohama I / ATCC BAA-589 / NCTC 13251), this protein is Indole-3-glycerol phosphate synthase.